Consider the following 1262-residue polypeptide: Cytoplasmic FMR1-interacting protein homolog (1262 aa).

The tract at residues 519–550 (LNRMTDVKGKKKSSAPKGDSANSSSSDIRIPR) is disordered.

This sequence belongs to the CYFIP family. In terms of assembly, interacts with gex-3.

The protein localises to the cytoplasm. Required for initial steps of body morphogenesis. May play a role in egg laying and yolk protein clatherin-mediated endocytosis by oocytes during oogenesis. Plays a role in the formation of muscle connections, also called muscle arm extensions, between the body wall and the motor axons in the dorsal and ventral cord. The sequence is that of Cytoplasmic FMR1-interacting protein homolog from Caenorhabditis elegans.